Consider the following 463-residue polypeptide: UDP-N-acetylmuramoylalanine--D-glutamate ligase (463 aa).

Position 109-115 (109-115 (GTDGKST)) interacts with ATP.

This sequence belongs to the MurCDEF family.

The protein localises to the cytoplasm. The catalysed reaction is UDP-N-acetyl-alpha-D-muramoyl-L-alanine + D-glutamate + ATP = UDP-N-acetyl-alpha-D-muramoyl-L-alanyl-D-glutamate + ADP + phosphate + H(+). It participates in cell wall biogenesis; peptidoglycan biosynthesis. Its function is as follows. Cell wall formation. Catalyzes the addition of glutamate to the nucleotide precursor UDP-N-acetylmuramoyl-L-alanine (UMA). This is UDP-N-acetylmuramoylalanine--D-glutamate ligase from Leptospira interrogans serogroup Icterohaemorrhagiae serovar Lai (strain 56601).